The following is an 807-amino-acid chain: Glycerol-3-phosphate acyltransferase (807 aa).

Positions 305–310 match the HXXXXD motif motif; that stretch reads CHRSHM.

This sequence belongs to the GPAT/DAPAT family.

It is found in the cell inner membrane. The enzyme catalyses sn-glycerol 3-phosphate + an acyl-CoA = a 1-acyl-sn-glycero-3-phosphate + CoA. It functions in the pathway phospholipid metabolism; CDP-diacylglycerol biosynthesis; CDP-diacylglycerol from sn-glycerol 3-phosphate: step 1/3. This is Glycerol-3-phosphate acyltransferase from Aliivibrio salmonicida (strain LFI1238) (Vibrio salmonicida (strain LFI1238)).